Consider the following 227-residue polypeptide: PKHD-type hydroxylase BTH_II1201 (227 aa).

Residues 78–178 enclose the Fe2OG dioxygenase domain; the sequence is KVFPPLFNRY…RVASFFWIQS (101 aa). Fe cation-binding residues include H96, D98, and H159. R169 is a binding site for 2-oxoglutarate.

Fe(2+) serves as cofactor. It depends on L-ascorbate as a cofactor.

This is PKHD-type hydroxylase BTH_II1201 from Burkholderia thailandensis (strain ATCC 700388 / DSM 13276 / CCUG 48851 / CIP 106301 / E264).